Consider the following 1182-residue polypeptide: Exocyst complex component 4 (1182 aa).

Low complexity predominate over residues 236 to 250 (NKNSNSNNSNNTFKS). 4 disordered regions span residues 236–262 (NKNSNSNNSNNTFKSPLPPTTTSPFKP), 376–427 (IPKM…SSNI), 525–545 (EETEGGGGDSDNDFEGTPKPT), and 921–968 (QQQQ…GSNN). Residues 392–409 (GSNGGGNNSMNGSGGING) are compositionally biased toward gly residues. Low complexity predominate over residues 410 to 426 (NGSTASSSSPTSSTSSN). Residues 921–932 (QQQQQQQQQQQQ) show a composition bias toward low complexity. Residues 933 to 968 (VDSIKTPSKLNSGINSGGNSTASNKENNSTTTGSNN) show a composition bias toward polar residues.

Belongs to the SEC8 family. As to quaternary structure, the exocyst complex is composed of sec3/exoc1, sec5/exoc2, sec6/exoc3, sec8/exoc4, sec10/exoc5, sec15/exoc6, exo70/exoc7 and exo84/exoc8.

The protein localises to the midbody. The protein resides in the midbody ring. It is found in the cell projection. Its subcellular location is the cytoplasm. It localises to the cytoskeleton. The protein localises to the microtubule organizing center. The protein resides in the centrosome. In terms of biological role, component of the exocyst complex involved in the docking of exocytic vesicles with fusion sites on the plasma membrane. This chain is Exocyst complex component 4 (exoc4), found in Dictyostelium discoideum (Social amoeba).